A 250-amino-acid polypeptide reads, in one-letter code: 3-deoxy-manno-octulosonate cytidylyltransferase (250 aa).

This sequence belongs to the KdsB family.

It is found in the cytoplasm. It catalyses the reaction 3-deoxy-alpha-D-manno-oct-2-ulosonate + CTP = CMP-3-deoxy-beta-D-manno-octulosonate + diphosphate. It functions in the pathway nucleotide-sugar biosynthesis; CMP-3-deoxy-D-manno-octulosonate biosynthesis; CMP-3-deoxy-D-manno-octulosonate from 3-deoxy-D-manno-octulosonate and CTP: step 1/1. It participates in bacterial outer membrane biogenesis; lipopolysaccharide biosynthesis. Its function is as follows. Activates KDO (a required 8-carbon sugar) for incorporation into bacterial lipopolysaccharide in Gram-negative bacteria. The protein is 3-deoxy-manno-octulosonate cytidylyltransferase of Syntrophobacter fumaroxidans (strain DSM 10017 / MPOB).